A 109-amino-acid polypeptide reads, in one-letter code: Parvalbumin beta (109 aa).

Alanine 2 bears the N-acetylalanine mark. 2 EF-hand domains span residues 39-74 (KSAD…FKAG) and 78-109 (LSDA…MIKG). Ca(2+) is bound by residues aspartate 52, aspartate 54, serine 56, tyrosine 58, glutamate 60, glutamate 63, aspartate 91, aspartate 93, aspartate 95, lysine 97, and glutamate 102.

This sequence belongs to the parvalbumin family. Post-translationally, the N-terminus is blocked.

In terms of biological role, in muscle, parvalbumin is thought to be involved in relaxation after contraction. It binds two calcium ions. This is Parvalbumin beta from Scomber scombrus (Atlantic mackerel).